A 185-amino-acid polypeptide reads, in one-letter code: Ribosome-recycling factor (185 aa).

The protein belongs to the RRF family.

Its subcellular location is the cytoplasm. Its function is as follows. Responsible for the release of ribosomes from messenger RNA at the termination of protein biosynthesis. May increase the efficiency of translation by recycling ribosomes from one round of translation to another. The sequence is that of Ribosome-recycling factor from Baumannia cicadellinicola subsp. Homalodisca coagulata.